We begin with the raw amino-acid sequence, 39 residues long: SPbeta prophage-derived uncharacterized protein YorT (39 aa).

This Bacillus subtilis (strain 168) protein is SPbeta prophage-derived uncharacterized protein YorT (yorT).